Consider the following 354-residue polypeptide: Galectin-9 (354 aa).

2 Galectin domains span residues Phe17 to Gln147 and Phe226 to Thr354. A beta-D-galactoside is bound by residues Asn47, His60, Arg64, Asn74, Trp81–Lys87, His266, Arg270, Thr280, and Trp286–Ser292.

As to expression, the isoform Long is expressed exclusively in the small intestine.

Its subcellular location is the cytoplasm. It localises to the nucleus. The protein localises to the secreted. Binds galactosides. Has high affinity for the Forssman pentasaccharide. Ligand for HAVCR2/TIM3. Binding to HAVCR2 induces T-helper type 1 lymphocyte (Th1) death. Also stimulates bactericidal activity in infected macrophages by causing macrophage activation and IL1B secretion which restricts intracellular bacterial growth. Ligand for P4HB; the interaction retains P4HB at the cell surface of Th2 T helper cells, increasing disulfide reductase activity at the plasma membrane, altering the plasma membrane redox state and enhancing cell migration. Ligand for CD44; the interaction enhances binding of SMAD3 to the FOXP3 promoter, leading to up-regulation of FOXP3 expression and increased induced regulatory T (iTreg) cell stability and suppressive function. Promotes ability of mesenchymal stromal cells to suppress T-cell proliferation. Expands regulatory T-cells and induces cytotoxic T-cell apoptosis following virus infection. Activates ERK1/2 phosphorylation inducing cytokine (IL-6, IL-8, IL-12) and chemokine (CCL2) production in mast and dendritic cells. Inhibits degranulation and induces apoptosis of mast cells. Induces maturation and migration of dendritic cells. Inhibits natural killer (NK) cell function. Can transform NK cell phenotype from peripheral to decidual during pregnancy. Astrocyte derived galectin-9 enhances microglial TNF production. May play a role in thymocyte-epithelial interactions relevant to the biology of the thymus. May provide the molecular basis for urate flux across cell membranes, allowing urate that is formed during purine metabolism to efflux from cells and serving as an electrogenic transporter that plays an important role in renal and gastrointestinal urate excretion. Highly selective to the anion urate. This Rattus norvegicus (Rat) protein is Galectin-9 (Lgals9).